The primary structure comprises 443 residues: D-inositol 3-phosphate glycosyltransferase (443 aa).

A 1D-myo-inositol 3-phosphate-binding site is contributed by histidine 30. Residues 36 to 37 (QP) and glycine 44 contribute to the UDP-N-acetyl-alpha-D-glucosamine site. Residues 41–46 (DAGGMN), lysine 99, tyrosine 132, threonine 156, and arginine 176 each bind 1D-myo-inositol 3-phosphate. UDP-N-acetyl-alpha-D-glucosamine contacts are provided by arginine 250, lysine 255, and arginine 316. Mg(2+) contacts are provided by phenylalanine 325, arginine 326, and cysteine 328. Residues glutamate 338 and glutamate 346 each coordinate UDP-N-acetyl-alpha-D-glucosamine. Threonine 352 lines the Mg(2+) pocket.

The protein belongs to the glycosyltransferase group 1 family. MshA subfamily. Homodimer.

It catalyses the reaction 1D-myo-inositol 3-phosphate + UDP-N-acetyl-alpha-D-glucosamine = 1D-myo-inositol 2-acetamido-2-deoxy-alpha-D-glucopyranoside 3-phosphate + UDP + H(+). Catalyzes the transfer of a N-acetyl-glucosamine moiety to 1D-myo-inositol 3-phosphate to produce 1D-myo-inositol 2-acetamido-2-deoxy-glucopyranoside 3-phosphate in the mycothiol biosynthesis pathway. This Stackebrandtia nassauensis (strain DSM 44728 / CIP 108903 / NRRL B-16338 / NBRC 102104 / LLR-40K-21) protein is D-inositol 3-phosphate glycosyltransferase.